The chain runs to 435 residues: Enolase (435 aa).

Gln163 contributes to the (2R)-2-phosphoglycerate binding site. Catalysis depends on Glu205, which acts as the Proton donor. Mg(2+) contacts are provided by Asp243, Glu292, and Asp319. (2R)-2-phosphoglycerate contacts are provided by Lys344, Arg373, Ser374, and Lys395. Lys344 (proton acceptor) is an active-site residue.

The protein belongs to the enolase family. Requires Mg(2+) as cofactor.

It localises to the cytoplasm. The protein resides in the secreted. Its subcellular location is the cell surface. The catalysed reaction is (2R)-2-phosphoglycerate = phosphoenolpyruvate + H2O. Its pathway is carbohydrate degradation; glycolysis; pyruvate from D-glyceraldehyde 3-phosphate: step 4/5. Catalyzes the reversible conversion of 2-phosphoglycerate (2-PG) into phosphoenolpyruvate (PEP). It is essential for the degradation of carbohydrates via glycolysis. This Streptococcus agalactiae serotype Ia (strain ATCC 27591 / A909 / CDC SS700) protein is Enolase.